The following is a 464-amino-acid chain: Gamma-aminobutyric acid receptor subunit rho-3 (464 aa).

Residues 1-15 (MVLAFWLAFFTYTWI) form the signal peptide. The Extracellular segment spans residues 16-263 (TLMLDASAVK…LFINFVLRRH (248 aa)). Arg108 is a binding site for 4-aminobutanoate. Residue Asn123 is glycosylated (N-linked (GlcNAc...) asparagine). Residue Ser172 participates in 4-aminobutanoate binding. A disulfide bridge links Cys181 with Cys195. Residue Asn194 is glycosylated (N-linked (GlcNAc...) asparagine). Glu200 contacts 4-aminobutanoate. Residues 264 to 284 (IFFFVLQTYFPAMLMVMLSWV) traverse the membrane as a helical segment. Residues 285-296 (SFWIDRRAVPAR) lie on the Cytoplasmic side of the membrane. The helical transmembrane segment at 297-317 (VSLGITTVLTMSTIVTGVSAS) threads the bilayer. The Extracellular segment spans residues 318–328 (MPQVSYVKAVD). A helical transmembrane segment spans residues 329 to 349 (VYMWVSSLFVFLSVIEYAAVN). An interaction with SQSTM1 region spans residues 344-445 (EYAAVNYLTT…NNHVIDTYSR (102 aa)). Topologically, residues 350–443 (YLTTVEEWKQ…LENNHVIDTY (94 aa)) are cytoplasmic. The chain crosses the membrane as a helical span at residues 444–464 (SRIVFPVVYIIFNLFYWGIYV).

The protein belongs to the ligand-gated ion channel (TC 1.A.9) family. Gamma-aminobutyric acid receptor (TC 1.A.9.5) subfamily. GABRR3 sub-subfamily. In terms of assembly, three rho subunits (rho-1/GBRR1, rho-2/GBRR2 and rho-3/GBRR3) coassemble either to form functional homopentamers or heteropentamers. Forms a ternary complex with SQSTM1 and PRKCZ. Expressed in retina.

It is found in the postsynaptic cell membrane. It localises to the cell membrane. The enzyme catalyses chloride(in) = chloride(out). With respect to regulation, activated by agonists in the following the potency order: muscimol &gt; TACP &gt; TACA &gt; thiomuscimol &gt; CAMP &gt; CACA, when forming a homopentamer. Inhibited by TPMPA, a rho-specific antagonist, when forming a homopentamer. Inhibited antagonists in the following the potency order: TAMP = TPMPA &gt; P4MPA = THIP &gt; 14AA &gt; 3-APA, when forming a homopentamer. Rho subunit of the pentameric ligand-gated chloride channels responsible for mediating the effects of gamma-aminobutyric acid (GABA), the major inhibitory neurotransmitter in the brain. Rho-containing GABA-gated chloride channels are a subclass of GABA(A) receptors (GABAARs) entirely composed of rho subunits, where GABA molecules bind at the rho intersubunit interfaces. When activated by GABA, rho-GABAARs selectively allow the flow of chloride anions across the cell membrane down their electrochemical gradient. The protein is Gamma-aminobutyric acid receptor subunit rho-3 of Rattus norvegicus (Rat).